Here is a 517-residue protein sequence, read N- to C-terminus: MISQICNEVIGLVPKKEEPGWLSVTGHPGAVYCENSISSGPEATGADVSQAIRIAYFTPLKHIPGPWYASLTGLRLSWSVFANNRIHYVHSLHQKYGPIVRIGPQEIDVADPVAGREIHRMGSGFMKAPFYELLSPGPVDNIFNFRDPKLHAARRKLYARGFTLQSLRNEWEPKVRDIIKLTVEKIKCDAVKGEAEIMGWWTLMANEIVCQLTFGGGAGIVAKGVKEPFVLMLERRMGDLAHLLKHFAPPGYYLGRALAWFIPPLQDIFYSQERMFAAGGDVVSRAREAKKAQAEPRNLFNKALEAGNLTDTDIITDAGALLLAGSDPTAISLTFLLWCVLSRPEVQKQVEAEVATLEGELTDEACERLPILNAVIDESLRLYGAAPGCMPRSPPSGGVTIGGYFIPDDTIVATQNWSLQRNPSIWDDADTFDHTRWLSNSRITDQAKLAFNPFGYGARQCLGIHLGRMEMRLAAAMFFRECVGARLGRSVTDESMHVVDSFIAGVPRDRRCAITLT.

Heme is bound at residue cysteine 461.

This sequence belongs to the cytochrome P450 family. Heme serves as cofactor.

It functions in the pathway mycotoxin biosynthesis; sterigmatocystin biosynthesis. In terms of biological role, cytochrome P450 monooxygenase; part of the gene cluster that mediates the biosynthesis of sterigmatocystin (ST), a polyketide-derived furanocoumarin which is part of the most toxic and carcinogenic compounds among the known mycotoxins. The first step in the biosynthesis of sterigmatocystin is the production of hexanoate by the fatty acid synthase (FAS) units stcJ and stcK. The polyketide backbone is assembled by the non-reducing polyketide synthase stcA by condensation of the starter hexanoyl-CoA and 7 malonyl-CoA extender units followed by cyclization and release of norsolorinic acid. Norsolorinic acid is the first stable intermediate in the biosynthesis of sterigmatocystin and is converted into averantin (AVN) by the ketoreductase stcE which reduces the hexanoate ketone to an alcohol. Averantin is then oxidized into 5'-hydroxyaverantin (HAVN) by the cytochrome P450 monooxygenase stcF. 5'-hydroxyaverantin is further converted to 5'-oxyaverantin (OAVN) by the 5'-hydroxyaverantin dehydrogenase stcG. The next step is the conversion of OAVN into averufin (AVF) which is catalyzed by a yet to be identified enzyme. The cytochrome P450 monooxygenase stcB and the flavin-binding monooxygenase stcW are both required for the conversion of averufin to 1-hydroxyversicolorone. The esterase stcI probably catalyzes the formation of versiconal hemiacetal acetate from 1-hydroxyversicolorone. The oxydoreductase stcN then probably catalyzes the biosynthetic step from versiconal to versicolorin B (VERB). The next step is performed by the versicolorin B desaturase stcL to produce versicolorin A (VERA). The ketoreductase stcU and the cytochrome P450 monooxygenase stcS are involved in the conversion of versicolorin A to demethylsterigmatocystin. The Baeyer-Villiger oxidas stcQ and the reductase stcR might be involved in the biosynthetic step from versicolorin A to demethylsterigmatocystin. The final step in the biosynthesis of sterigmatocystin is the methylation of demethylsterigmatocystin catalyzed by the methyltransferase stcP. The protein is Cytochrome P450 monooxygenase stcB of Emericella nidulans (strain FGSC A4 / ATCC 38163 / CBS 112.46 / NRRL 194 / M139) (Aspergillus nidulans).